The sequence spans 349 residues: 5-deoxyribose 1-phosphate isomerase (349 aa).

Substrate is bound by residues arginine 49 to alanine 51, arginine 92, and glutamine 199. Aspartate 240 functions as the Proton donor in the catalytic mechanism. Asparagine 250–lysine 251 is a substrate binding site.

The protein belongs to the EIF-2B alpha/beta/delta subunits family. DrdI subfamily.

The catalysed reaction is 5-deoxy-alpha-D-ribose 1-phosphate = 5-deoxy-D-ribulose 1-phosphate. The protein operates within carbohydrate degradation. Functionally, catalyzes the isomerization of 5-deoxy-alpha-D-ribose 1-phosphate to 5-deoxy-D-ribulose 1-phosphate, as part of a 5-deoxyribose salvage pathway that recycles this toxic radical SAM enzyme by-product to mainstream metabolites. This is 5-deoxyribose 1-phosphate isomerase from Clostridium botulinum (strain ATCC 19397 / Type A).